The primary structure comprises 159 residues: Cytochrome c-type biogenesis protein CcmE (159 aa).

At 1-8 (MNIRRKNR) the chain is on the cytoplasmic side. A helical; Signal-anchor for type II membrane protein membrane pass occupies residues 9 to 29 (LWIACAVLAGLALTIGLVLYA). Over 30 to 159 (LRSNIDLFYT…PASVYKDPAS (130 aa)) the chain is Periplasmic. Residues His130 and Tyr134 each coordinate heme. The segment covering 132 to 147 (ENYTPPEVEKAMEANH) has biased composition (basic and acidic residues). A disordered region spans residues 132 to 159 (ENYTPPEVEKAMEANHRRPASVYKDPAS).

Belongs to the CcmE/CycJ family.

It is found in the cell inner membrane. Functionally, heme chaperone required for the biogenesis of c-type cytochromes. Transiently binds heme delivered by CcmC and transfers the heme to apo-cytochromes in a process facilitated by CcmF and CcmH. The sequence is that of Cytochrome c-type biogenesis protein CcmE from Escherichia coli (strain 55989 / EAEC).